The chain runs to 476 residues: Glycogen synthase (476 aa).

K15 is a binding site for ADP-alpha-D-glucose.

It belongs to the glycosyltransferase 1 family. Bacterial/plant glycogen synthase subfamily.

It carries out the reaction [(1-&gt;4)-alpha-D-glucosyl](n) + ADP-alpha-D-glucose = [(1-&gt;4)-alpha-D-glucosyl](n+1) + ADP + H(+). The protein operates within glycan biosynthesis; glycogen biosynthesis. Synthesizes alpha-1,4-glucan chains using ADP-glucose. The protein is Glycogen synthase of Yersinia pseudotuberculosis serotype O:1b (strain IP 31758).